Here is a 492-residue protein sequence, read N- to C-terminus: MKTNPLVFVVSTAVEKNAGYITQIIGPVLDVAFSPGKLPNIYNSLIVKGQNPAGQEINVTCEVQQLLGNDRVRAVAMSATDGLMRGMKVIDTGAPLSVPVGEVTLGRIFNVLGEPVDNLGPVDAGTTSPIHKSAPAFTQLDTKLSIFETGIKVVDLSAPYRRGGKIGLFGGAGVGKTVLIMELINNIAKAHGGVSVFGGVGERTREGNDLYMEMKESKVINQENISESKVALVYGQMNEPPGARMRVGLTALTMAEYFRDVNKQDVLLFIDNIFRFVQAGSEVSASSGRMPSAVGYQPTLATEMGSLQERITSTKEGSITSIQAVYVPADDLTDPAPATTFAHSDATTVLSRGLAAKGIYPAVDPLDSTSTMLQPWIVGEEHYETAQGVKQTLQRYKELQDIIAILGLDELSEEDRLTVARARKIERFLSQPFFVAEVFTGSPGKYVSLIETIKGFQMILSGELDSLPEQAFYLVGNIDEATAKAATLQVES.

Position 170–177 (170–177 (GGAGVGKT)) interacts with ATP.

Belongs to the ATPase alpha/beta chains family. As to quaternary structure, F-type ATPases have 2 components, CF(1) - the catalytic core - and CF(0) - the membrane proton channel. CF(1) has five subunits: alpha(3), beta(3), gamma(1), delta(1), epsilon(1). CF(0) has four main subunits: a(1), b(1), b'(1) and c(9-12).

Its subcellular location is the plastid. The protein localises to the chloroplast thylakoid membrane. It catalyses the reaction ATP + H2O + 4 H(+)(in) = ADP + phosphate + 5 H(+)(out). Functionally, produces ATP from ADP in the presence of a proton gradient across the membrane. The catalytic sites are hosted primarily by the beta subunits. The polypeptide is ATP synthase subunit beta, chloroplastic (Angiopteris evecta (Mule's foot fern)).